A 230-amino-acid chain; its full sequence is Demethylmenaquinone methyltransferase (230 aa).

Residues Thr62, Asp80, 100 to 101 (DG), and Ser117 each bind S-adenosyl-L-methionine.

The protein belongs to the class I-like SAM-binding methyltransferase superfamily. MenG/UbiE family.

The catalysed reaction is a 2-demethylmenaquinol + S-adenosyl-L-methionine = a menaquinol + S-adenosyl-L-homocysteine + H(+). The protein operates within quinol/quinone metabolism; menaquinone biosynthesis; menaquinol from 1,4-dihydroxy-2-naphthoate: step 2/2. Methyltransferase required for the conversion of demethylmenaquinol (DMKH2) to menaquinol (MKH2). This Corynebacterium efficiens (strain DSM 44549 / YS-314 / AJ 12310 / JCM 11189 / NBRC 100395) protein is Demethylmenaquinone methyltransferase.